The sequence spans 443 residues: Thymidine phosphorylase (443 aa).

Belongs to the thymidine/pyrimidine-nucleoside phosphorylase family. As to quaternary structure, homodimer.

It carries out the reaction thymidine + phosphate = 2-deoxy-alpha-D-ribose 1-phosphate + thymine. The protein operates within pyrimidine metabolism; dTMP biosynthesis via salvage pathway; dTMP from thymine: step 1/2. In terms of biological role, the enzymes which catalyze the reversible phosphorolysis of pyrimidine nucleosides are involved in the degradation of these compounds and in their utilization as carbon and energy sources, or in the rescue of pyrimidine bases for nucleotide synthesis. This Shewanella sp. (strain MR-7) protein is Thymidine phosphorylase.